The following is a 315-amino-acid chain: Homoserine kinase (315 aa).

96–106 (PHSRGLGSSAA) is an ATP binding site.

Belongs to the GHMP kinase family. Homoserine kinase subfamily.

The protein resides in the cytoplasm. It carries out the reaction L-homoserine + ATP = O-phospho-L-homoserine + ADP + H(+). Its pathway is amino-acid biosynthesis; L-threonine biosynthesis; L-threonine from L-aspartate: step 4/5. Functionally, catalyzes the ATP-dependent phosphorylation of L-homoserine to L-homoserine phosphate. In Mycobacterium leprae (strain Br4923), this protein is Homoserine kinase.